Consider the following 447-residue polypeptide: UDP-glycosyltransferase 76E3 (447 aa).

UDP-alpha-D-glucose contacts are provided by residues S269, 328-330 (APQ), 345-353 (HCGWNSTLE), and 367-370 (QGEQ).

It belongs to the UDP-glycosyltransferase family.

This chain is UDP-glycosyltransferase 76E3 (UGT76E3), found in Arabidopsis thaliana (Mouse-ear cress).